We begin with the raw amino-acid sequence, 136 residues long: Congerin-2 (136 aa).

At Ser-2 the chain carries N-acetylserine. Positions 4–136 constitute a Galectin domain; sequence RAEVRNIPFK…DARLTFVRLE (133 aa). 70 to 76 contacts a beta-D-galactoside; the sequence is WQQEERS.

As to quaternary structure, homodimer.

Functionally, this protein binds beta-galactoside. Its physiological function is not yet known. The chain is Congerin-2 from Conger myriaster (Conger eel).